We begin with the raw amino-acid sequence, 259 residues long: Exotoxin A regulatory protein (259 aa).

The protein localises to the cell inner membrane. Functionally, positive regulation of toxA gene transcription. This chain is Exotoxin A regulatory protein (toxR), found in Pseudomonas aeruginosa (strain ATCC 15692 / DSM 22644 / CIP 104116 / JCM 14847 / LMG 12228 / 1C / PRS 101 / PAO1).